The primary structure comprises 44 residues: Large ribosomal subunit protein bL34 (44 aa).

It belongs to the bacterial ribosomal protein bL34 family.

The protein is Large ribosomal subunit protein bL34 of Buchnera aphidicola subsp. Cinara cedri (strain Cc).